The following is a 110-amino-acid chain: DNA-binding protein PAE3044 (110 aa).

Belongs to the PDCD5 family.

This is DNA-binding protein PAE3044 from Pyrobaculum aerophilum (strain ATCC 51768 / DSM 7523 / JCM 9630 / CIP 104966 / NBRC 100827 / IM2).